The chain runs to 637 residues: Nuclear receptor subfamily 2 group C member 1-A (637 aa).

Residues 149–224 (VELCVVCGDK…LGMKQDSVQC (76 aa)) constitute a DNA-binding region (nuclear receptor). 2 consecutive NR C4-type zinc fingers follow at residues 152–172 (CVVCGDKASGRHYGAVTCEGC) and 188–207 (CRGSKDCVINKHYRNRCQYC). One can recognise an NR LBD domain in the interval 383 to 624 (CLGSNANLLH…SIIPYILRME (242 aa)).

Belongs to the nuclear hormone receptor family. NR2 subfamily.

It localises to the nucleus. Functionally, orphan nuclear receptor. Binds the IR7 element in the promoter of its own gene in an autoregulatory negative feedback mechanism. Primarily repressor of a broad range of genes. Binds to hormone response elements (HREs) consisting of two 5'-AGGTCA-3' half site direct repeat consensus sequences. This Xenopus laevis (African clawed frog) protein is Nuclear receptor subfamily 2 group C member 1-A (nr2c1-a).